Here is a 430-residue protein sequence, read N- to C-terminus: 3-phosphoshikimate 1-carboxyvinyltransferase (430 aa).

Residues lysine 20, serine 21, and arginine 25 each coordinate 3-phosphoshikimate. Lysine 20 is a phosphoenolpyruvate binding site. Residues glycine 92 and arginine 120 each coordinate phosphoenolpyruvate. The 3-phosphoshikimate site is built by serine 166, glutamine 168, aspartate 312, and lysine 339. Glutamine 168 serves as a coordination point for phosphoenolpyruvate. Catalysis depends on aspartate 312, which acts as the Proton acceptor. Arginine 343 and arginine 387 together coordinate phosphoenolpyruvate.

The protein belongs to the EPSP synthase family. In terms of assembly, monomer.

Its subcellular location is the cytoplasm. The catalysed reaction is 3-phosphoshikimate + phosphoenolpyruvate = 5-O-(1-carboxyvinyl)-3-phosphoshikimate + phosphate. The protein operates within metabolic intermediate biosynthesis; chorismate biosynthesis; chorismate from D-erythrose 4-phosphate and phosphoenolpyruvate: step 6/7. Catalyzes the transfer of the enolpyruvyl moiety of phosphoenolpyruvate (PEP) to the 5-hydroxyl of shikimate-3-phosphate (S3P) to produce enolpyruvyl shikimate-3-phosphate and inorganic phosphate. The protein is 3-phosphoshikimate 1-carboxyvinyltransferase of Lactococcus lactis subsp. lactis (strain IL1403) (Streptococcus lactis).